Consider the following 670-residue polypeptide: Acetyl-coenzyme A synthetase (670 aa).

CoA is bound by residues 205-208 (RRGR) and T326. ATP is bound by residues 402–404 (GEP), 426–431 (STWWMT), D517, R532, and R543. The Mg(2+) site is built by H556 and V559. CoA is bound at residue R601. K626 is modified (N6-acetyllysine).

This sequence belongs to the ATP-dependent AMP-binding enzyme family. Mg(2+) serves as cofactor. In terms of processing, acetylated. Deacetylation by the SIR2-homolog deacetylase activates the enzyme.

It carries out the reaction acetate + ATP + CoA = acetyl-CoA + AMP + diphosphate. Its function is as follows. Catalyzes the conversion of acetate into acetyl-CoA (AcCoA), an essential intermediate at the junction of anabolic and catabolic pathways. AcsA undergoes a two-step reaction. In the first half reaction, AcsA combines acetate with ATP to form acetyl-adenylate (AcAMP) intermediate. In the second half reaction, it can then transfer the acetyl group from AcAMP to the sulfhydryl group of CoA, forming the product AcCoA. This chain is Acetyl-coenzyme A synthetase, found in Pyrobaculum aerophilum (strain ATCC 51768 / DSM 7523 / JCM 9630 / CIP 104966 / NBRC 100827 / IM2).